The sequence spans 128 residues: Large ribosomal subunit protein bL17 (128 aa).

The protein belongs to the bacterial ribosomal protein bL17 family. Part of the 50S ribosomal subunit. Contacts protein L32.

In Proteus mirabilis (strain HI4320), this protein is Large ribosomal subunit protein bL17.